The primary structure comprises 120 residues: Large ribosomal subunit protein uL18 (120 aa).

The interval 1–25 (MKQTRTAARQSRHQRIRRKVKGTSD) is disordered. Residues 10–21 (QSRHQRIRRKVK) are compositionally biased toward basic residues.

The protein belongs to the universal ribosomal protein uL18 family. In terms of assembly, part of the 50S ribosomal subunit; part of the 5S rRNA/L5/L18/L25 subcomplex. Contacts the 5S and 23S rRNAs.

In terms of biological role, this is one of the proteins that bind and probably mediate the attachment of the 5S RNA into the large ribosomal subunit, where it forms part of the central protuberance. In Thermosynechococcus vestitus (strain NIES-2133 / IAM M-273 / BP-1), this protein is Large ribosomal subunit protein uL18.